The chain runs to 255 residues: Alpha-acetolactate decarboxylase (255 aa).

This sequence belongs to the alpha-acetolactate decarboxylase family.

It catalyses the reaction (2S)-2-acetolactate + H(+) = (R)-acetoin + CO2. Its pathway is polyol metabolism; (R,R)-butane-2,3-diol biosynthesis; (R,R)-butane-2,3-diol from pyruvate: step 2/3. Converts acetolactate into acetoin, which can be excreted by the cells. This may be a mechanism for controlling the internal pH of cells in the stationary stage. The chain is Alpha-acetolactate decarboxylase (alsD) from Bacillus subtilis (strain 168).